An 822-amino-acid polypeptide reads, in one-letter code: Protein SIEVE ELEMENT OCCLUSION A (822 aa).

Residues 25–62 form a disordered region; it reads PRSAEQRLADNAGERRPLAPRSHEDNPFGGHTDDHHVA. A compositionally biased stretch (basic and acidic residues) spans 28-62; that stretch reads AEQRLADNAGERRPLAPRSHEDNPFGGHTDDHHVA.

In terms of assembly, can form homodimer. As to expression, expressed in phloem sieve elements.

In terms of biological role, scaffold protein required to form the phloem filament matrix in sieve elements. The polypeptide is Protein SIEVE ELEMENT OCCLUSION A (Arabidopsis thaliana (Mouse-ear cress)).